The sequence spans 622 residues: DNA mismatch repair protein MutL (622 aa).

The protein belongs to the DNA mismatch repair MutL/HexB family.

Its function is as follows. This protein is involved in the repair of mismatches in DNA. It is required for dam-dependent methyl-directed DNA mismatch repair. May act as a 'molecular matchmaker', a protein that promotes the formation of a stable complex between two or more DNA-binding proteins in an ATP-dependent manner without itself being part of a final effector complex. The sequence is that of DNA mismatch repair protein MutL from Actinobacillus pleuropneumoniae serotype 3 (strain JL03).